The sequence spans 397 residues: S-adenosylmethionine synthase (397 aa).

Residue His17 participates in ATP binding. Mg(2+) is bound at residue Asp19. Glu45 serves as a coordination point for K(+). L-methionine contacts are provided by Glu58 and Gln101. Residues 101-111 form a flexible loop region; it reads QSPDIAQGVDK. Residues 176–178, 243–244, Asp252, 258–259, and Lys279 contribute to the ATP site; these read DGK, RF, and RK. Residue Asp252 participates in L-methionine binding. Lys283 contributes to the L-methionine binding site.

It belongs to the AdoMet synthase family. In terms of assembly, homotetramer; dimer of dimers. Requires Mg(2+) as cofactor. K(+) is required as a cofactor.

It localises to the cytoplasm. It catalyses the reaction L-methionine + ATP + H2O = S-adenosyl-L-methionine + phosphate + diphosphate. The protein operates within amino-acid biosynthesis; S-adenosyl-L-methionine biosynthesis; S-adenosyl-L-methionine from L-methionine: step 1/1. Catalyzes the formation of S-adenosylmethionine (AdoMet) from methionine and ATP. The overall synthetic reaction is composed of two sequential steps, AdoMet formation and the subsequent tripolyphosphate hydrolysis which occurs prior to release of AdoMet from the enzyme. This Staphylococcus aureus (strain MRSA252) protein is S-adenosylmethionine synthase.